A 656-amino-acid chain; its full sequence is Chaperone protein DnaK (656 aa).

Gly residues predominate over residues 590-605 (GGAAGGAAGGAAGGAA). The interval 590-656 (GGAAGGAAGG…DGQPKPGPAA (67 aa)) is disordered. The span at 606 to 621 (GDAAGAAGDSTGDAAG) shows a compositional bias: low complexity. A compositionally biased stretch (gly residues) spans 622–635 (AAGGPSEGPAGDAG).

It belongs to the heat shock protein 70 family.

Functionally, acts as a chaperone. The polypeptide is Chaperone protein DnaK (Cenarchaeum symbiosum (strain A)).